The primary structure comprises 316 residues: Pantothenate kinase (316 aa).

Residue 95-102 (GSVAVGKS) coordinates ATP.

Belongs to the prokaryotic pantothenate kinase family.

It is found in the cytoplasm. It catalyses the reaction (R)-pantothenate + ATP = (R)-4'-phosphopantothenate + ADP + H(+). It functions in the pathway cofactor biosynthesis; coenzyme A biosynthesis; CoA from (R)-pantothenate: step 1/5. The chain is Pantothenate kinase from Shewanella piezotolerans (strain WP3 / JCM 13877).